Here is a 513-residue protein sequence, read N- to C-terminus: DNA damage response protein kinase DUN1 (513 aa).

Positions 1 to 12 are enriched in basic and acidic residues; that stretch reads MSLSTKREHSGD. Residues 1-29 form a disordered region; sequence MSLSTKREHSGDVTDSSFKRQQRSNKPSS. Ser-10 is modified (phosphoserine). Positions 56 to 112 constitute an FHA domain; the sequence is TTIGRSRSCDVILSEPDISTFHAEFHLLQMDVDNFQRNLINVIDKSRNGTFINGNRL. Ser-139 bears the Phosphoserine mark. The Protein kinase domain occupies 200-480; sequence YLLGKELGAG…IDEALNHPWF (281 aa). ATP contacts are provided by residues 206–214 and Lys-229; that span reads LGAGHYALV. The active-site Proton acceptor is Asp-328. Thr-380 carries the phosphothreonine modification.

This sequence belongs to the protein kinase superfamily. CAMK Ser/Thr protein kinase family. CHEK2 subfamily. As to quaternary structure, interacts with the PAB-dependent poly(A)-nuclease (PAN) complex regulatory subunit PAN3 via its forkhead-associated (FHA) domain. In terms of processing, autophosphorylation increases in response to DNA damage.

Its subcellular location is the nucleus. It catalyses the reaction L-seryl-[protein] + ATP = O-phospho-L-seryl-[protein] + ADP + H(+). The catalysed reaction is L-threonyl-[protein] + ATP = O-phospho-L-threonyl-[protein] + ADP + H(+). Its function is as follows. Transducer of the DNA damage signal. Phosphorylates SML1 on serine residues. Cooperates with the PAN deadenylation complex in the regulation of RAD5 mRNA levels and cell survival in response to replicational stress. The polypeptide is DNA damage response protein kinase DUN1 (DUN1) (Saccharomyces cerevisiae (strain ATCC 204508 / S288c) (Baker's yeast)).